A 127-amino-acid polypeptide reads, in one-letter code: Methylglyoxal synthase (127 aa).

The MGS-like domain occupies 1 to 127 (MEGQRCIALI…ENLIDFNSAD (127 aa)). Substrate contacts are provided by residues H12, K16, 38–41 (TGTT), and 59–60 (SG). Catalysis depends on D65, which acts as the Proton donor/acceptor. H92 is a binding site for substrate.

The protein belongs to the methylglyoxal synthase family.

The catalysed reaction is dihydroxyacetone phosphate = methylglyoxal + phosphate. Its function is as follows. Catalyzes the formation of methylglyoxal from dihydroxyacetone phosphate. This Agrobacterium fabrum (strain C58 / ATCC 33970) (Agrobacterium tumefaciens (strain C58)) protein is Methylglyoxal synthase.